A 218-amino-acid chain; its full sequence is NAD(P)H-hydrate epimerase (218 aa).

The YjeF N-terminal domain occupies 9 to 215 (MKKIDQYAID…DIGIPQKAIR (207 aa)). 55 to 59 (NNGAD) contacts (6S)-NADPHX. Positions 56 and 127 each coordinate K(+). (6S)-NADPHX-binding positions include 131 to 137 (GTGLNRT) and Asp-160. Ser-163 is a binding site for K(+).

Belongs to the NnrE/AIBP family. Requires K(+) as cofactor.

It carries out the reaction (6R)-NADHX = (6S)-NADHX. The enzyme catalyses (6R)-NADPHX = (6S)-NADPHX. In terms of biological role, catalyzes the epimerization of the S- and R-forms of NAD(P)HX, a damaged form of NAD(P)H that is a result of enzymatic or heat-dependent hydration. This is a prerequisite for the S-specific NAD(P)H-hydrate dehydratase to allow the repair of both epimers of NAD(P)HX. The chain is NAD(P)H-hydrate epimerase from Anaerococcus prevotii (strain ATCC 9321 / DSM 20548 / JCM 6508 / NCTC 11806 / PC1) (Peptostreptococcus prevotii).